The primary structure comprises 202 residues: Probable nicotinate-nucleotide adenylyltransferase (202 aa).

The protein belongs to the NadD family.

It carries out the reaction nicotinate beta-D-ribonucleotide + ATP + H(+) = deamido-NAD(+) + diphosphate. Its pathway is cofactor biosynthesis; NAD(+) biosynthesis; deamido-NAD(+) from nicotinate D-ribonucleotide: step 1/1. Functionally, catalyzes the reversible adenylation of nicotinate mononucleotide (NaMN) to nicotinic acid adenine dinucleotide (NaAD). This Clostridium perfringens (strain ATCC 13124 / DSM 756 / JCM 1290 / NCIMB 6125 / NCTC 8237 / Type A) protein is Probable nicotinate-nucleotide adenylyltransferase.